A 519-amino-acid polypeptide reads, in one-letter code: Threonine synthase, chloroplastic (519 aa).

Residues 1 to 40 (MAASCMLRSSFISPGLPQLHHQSTSKPNNGIHFFTPIKAT) constitute a chloroplast transit peptide. Lys-196 is subject to N6-(pyridoxal phosphate)lysine. Residues 328 to 332 (GNLGN) and Thr-465 each bind pyridoxal 5'-phosphate.

It belongs to the threonine synthase family. Homodimer. Pyridoxal 5'-phosphate serves as cofactor.

The protein localises to the plastid. It localises to the chloroplast. The catalysed reaction is O-phospho-L-homoserine + H2O = L-threonine + phosphate. It participates in amino-acid biosynthesis; L-threonine biosynthesis; L-threonine from L-aspartate: step 5/5. Its activity is regulated as follows. Allosterically activated by S-adenosyl-methionine (SAM). In terms of biological role, catalyzes the gamma-elimination of phosphate from L-phosphohomoserine and the beta-addition of water to produce L-threonine. The protein is Threonine synthase, chloroplastic of Solanum tuberosum (Potato).